Here is a 1002-residue protein sequence, read N- to C-terminus: Glutamate receptor ionotropic, NMDA 3B (1002 aa).

The first 24 residues, methionine 1–glycine 24, serve as a signal peptide directing secretion. At histidine 25 to histidine 574 the chain is on the extracellular side. Asparagine 69, asparagine 212, asparagine 344, asparagine 451, and asparagine 465 each carry an N-linked (GlcNAc...) asparagine glycan. Disulfide bonds link cysteine 439/cysteine 475 and cysteine 445/cysteine 476. Glycine contacts are provided by serine 531, serine 533, and arginine 538. Residues serine 533 and arginine 538 each contribute to the D-serine site. The chain crosses the membrane as a helical span at residues tryptophan 575–leucine 594. Topologically, residues tyrosine 595–serine 615 are cytoplasmic. The segment at residues tyrosine 616–leucine 627 is an intramembrane region (discontinuously helical). Topologically, residues phenylalanine 628–threonine 641 are cytoplasmic. The helical transmembrane segment at glycine 642–threonine 661 threads the bilayer. Residues alanine 662–serine 832 lie on the Extracellular side of the membrane. Serine 701 contacts glycine. 3 residues coordinate D-serine: serine 701, alanine 702, and aspartate 745. Aspartate 745 is a binding site for glycine. Asparagine 786 carries N-linked (GlcNAc...) asparagine glycosylation. The chain crosses the membrane as a helical span at residues glycine 833–threonine 848. Residues serine 849–serine 1002 lie on the Cytoplasmic side of the membrane. The interval alanine 882–aspartate 910 is disordered. Residues glutamine 891–leucine 906 are compositionally biased toward basic and acidic residues. Positions leucine 944–aspartate 985 form a coiled coil. Positions leucine 951–glycine 984 are involved in the trafficking and surface expression of NMDARs.

Belongs to the glutamate-gated ion channel (TC 1.A.10.1) family. NR3B/GRIN3B subfamily. In terms of assembly, forms heterotetrameric channels that contain at least two GluN1 subunits and at least a combination of one GluN2 and one GluN3 subunits (in vitro). Forms heterotetrameric channels composed of two GluN1/zeta subunits (GRIN1), and two identical GluN3 subunits (GRIN3A or GRIN3B) (in vitro). Does not form functional homomeric channels. Expressed in the hippocampus, the corpus callosum, in the facial and trigeminal nuclei of the brainstem and the ventral horn of the spinal cord.

The protein localises to the cell membrane. The protein resides in the postsynaptic cell membrane. The catalysed reaction is Ca(2+)(in) = Ca(2+)(out). It carries out the reaction Na(+)(in) = Na(+)(out). With respect to regulation, excitatory glycine receptors are inhibited by D-serine at a concentrion of 100uM. Functionally, component of a non-conventional N-methyl-D-aspartate (NMDA) receptors (NMDARs) that function as heterotetrameric, ligand-gated cation channels with low calcium permeability and low voltage-dependent block by Mg(2+). Forms glutamatergic receptor complexes with GluN1 and GluN2 subunits which are activated by glycine binding to the GluN1 and GluN3 subunits and L-glutamate binding to GluN2 subunits. Forms excitatory glycinergic receptor complexes with GluN1 alone which are activated by glycine binding to the GluN1 and GluN3 subunits. GluN3B subunit also binds D-serine and, in the absence of glycine, activates glycinergic receptor complexes, but with lower efficacy than glycine. Each GluN3 subunit confers differential attributes to channel properties, including activation, deactivation and desensitization kinetics, pH sensitivity, Ca2(+) permeability, and binding to allosteric modulators. In Rattus norvegicus (Rat), this protein is Glutamate receptor ionotropic, NMDA 3B.